Reading from the N-terminus, the 250-residue chain is tRNA-specific adenosine deaminase subunit TAD2 (250 aa).

One can recognise a CMP/dCMP-type deaminase domain in the interval 1 to 119 (MQHIKHMRTA…ERFGGNGTVL (119 aa)). H54 provides a ligand contact to Zn(2+). The active-site Proton donor is E56. The Zn(2+) site is built by C88 and C91.

It belongs to the cytidine and deoxycytidylate deaminase family. ADAT2 subfamily. In terms of assembly, heterodimer with TAD3. It depends on Zn(2+) as a cofactor.

The protein localises to the cytoplasm. Its subcellular location is the nucleus. It carries out the reaction adenosine(34) in tRNA + H2O + H(+) = inosine(34) in tRNA + NH4(+). Structural subunit of tRNA-specific adenosine deaminase, which deaminates adenosine-34 (the first, also called wobble position of the anticodon) to inosine in many tRNAs. Inosine-34 allows the decoding of 3 different nucleotides at the third position of mRNA codons, as inosine is able to pair with U, C, and A. This chain is tRNA-specific adenosine deaminase subunit TAD2 (TAD2), found in Saccharomyces cerevisiae (strain ATCC 204508 / S288c) (Baker's yeast).